Consider the following 318-residue polypeptide: Beta-sarcoglycan (318 aa).

The segment at 1–32 is disordered; that stretch reads MAAAAAAAAEQQSSNGPVKKSMREKAVERRNV. Over 1–65 the chain is Cytoplasmic; that stretch reads MAAAAAAAAE…GLRGRKGNLA (65 aa). The span at 21–32 shows a compositional bias: basic and acidic residues; that stretch reads SMREKAVERRNV. The helical; Signal-anchor for type II membrane protein transmembrane segment at 66–86 threads the bilayer; sequence ICVIVLLFLLAVINLIITLVI. The Extracellular segment spans residues 87-318; it reads WAVIRIGPNG…VSDNPCGNTH (232 aa). 3 N-linked (GlcNAc...) asparagine glycosylation sites follow: Asn158, Asn211, and Asn258. Cystine bridges form between Cys288–Cys314 and Cys290–Cys307.

Belongs to the sarcoglycan beta/delta/gamma/zeta family. As to quaternary structure, cross-link to form 2 major subcomplexes: one consisting of SGCB, SGCD and SGCG and the other consisting of SGCB and SGCD. The association between SGCB and SGCG is particularly strong while SGCA is loosely associated with the other sarcoglycans. Post-translationally, disulfide bonds are present.

Its subcellular location is the cell membrane. The protein localises to the sarcolemma. It localises to the cytoplasm. It is found in the cytoskeleton. Functionally, component of the sarcoglycan complex, a subcomplex of the dystrophin-glycoprotein complex which forms a link between the F-actin cytoskeleton and the extracellular matrix. The protein is Beta-sarcoglycan (SGCB) of Oryctolagus cuniculus (Rabbit).